The following is a 108-amino-acid chain: UPF0060 membrane protein YnfA (108 aa).

Topologically, residues 1–5 (MIKTT) are periplasmic. A helical transmembrane segment spans residues 6-26 (LLFFATALCEIIGCFLPWLWL). Topologically, residues 27–30 (KRNA) are cytoplasmic. The helical transmembrane segment at 31 to 51 (SIWLLLPAGISLALFVWLLTL) threads the bilayer. The Periplasmic segment spans residues 52–60 (HPAASGRVY). A helical transmembrane segment spans residues 61–81 (AAYGGVYVCTALIWLRVVDGV). Residues 82-84 (KLT) lie on the Cytoplasmic side of the membrane. The helical transmembrane segment at 85 to 105 (LYDWTGALIALCGMLIIVAGW) threads the bilayer. The Periplasmic segment spans residues 106–108 (GRT).

The protein belongs to the UPF0060 family.

It localises to the cell inner membrane. The protein is UPF0060 membrane protein YnfA of Escherichia coli O127:H6 (strain E2348/69 / EPEC).